The chain runs to 425 residues: Glutamyl-tRNA reductase (425 aa).

Substrate is bound by residues 49 to 52 (TCNR), S109, 114 to 116 (EGQ), and Q120. C50 serves as the catalytic Nucleophile. 189–194 (GAGETG) contributes to the NADP(+) binding site.

It belongs to the glutamyl-tRNA reductase family. In terms of assembly, homodimer.

The catalysed reaction is (S)-4-amino-5-oxopentanoate + tRNA(Glu) + NADP(+) = L-glutamyl-tRNA(Glu) + NADPH + H(+). The protein operates within porphyrin-containing compound metabolism; protoporphyrin-IX biosynthesis; 5-aminolevulinate from L-glutamyl-tRNA(Glu): step 1/2. Its pathway is porphyrin-containing compound metabolism; chlorophyll biosynthesis. Its function is as follows. Catalyzes the NADPH-dependent reduction of glutamyl-tRNA(Glu) to glutamate 1-semialdehyde (GSA). In Pelodictyon phaeoclathratiforme (strain DSM 5477 / BU-1), this protein is Glutamyl-tRNA reductase.